Reading from the N-terminus, the 76-residue chain is Sec-independent protein translocase protein TatA (76 aa).

Residues 1 to 21 form a helical membrane-spanning segment; sequence MGSFSIWHWLIVLAVVLLLFG. Residues 43–76 are disordered; that stretch reads MSDEDAKDDARDSGRTIDAKADETVNDVKKTTKS. The segment covering 50–76 has biased composition (basic and acidic residues); it reads DDARDSGRTIDAKADETVNDVKKTTKS.

This sequence belongs to the TatA/E family. The Tat system comprises two distinct complexes: a TatABC complex, containing multiple copies of TatA, TatB and TatC subunits, and a separate TatA complex, containing only TatA subunits. Substrates initially bind to the TatABC complex, which probably triggers association of the separate TatA complex to form the active translocon.

It localises to the cell inner membrane. Functionally, part of the twin-arginine translocation (Tat) system that transports large folded proteins containing a characteristic twin-arginine motif in their signal peptide across membranes. TatA could form the protein-conducting channel of the Tat system. In Brucella anthropi (strain ATCC 49188 / DSM 6882 / CCUG 24695 / JCM 21032 / LMG 3331 / NBRC 15819 / NCTC 12168 / Alc 37) (Ochrobactrum anthropi), this protein is Sec-independent protein translocase protein TatA.